The sequence spans 185 residues: Ribosome-recycling factor (185 aa).

This sequence belongs to the RRF family.

The protein localises to the cytoplasm. Functionally, responsible for the release of ribosomes from messenger RNA at the termination of protein biosynthesis. May increase the efficiency of translation by recycling ribosomes from one round of translation to another. This is Ribosome-recycling factor from Campylobacter jejuni (strain RM1221).